The following is a 362-amino-acid chain: Heat-inducible transcription repressor HrcA (362 aa).

The protein belongs to the HrcA family.

Its function is as follows. Negative regulator of class I heat shock genes (grpE-dnaK-dnaJ and groELS operons). Prevents heat-shock induction of these operons. The protein is Heat-inducible transcription repressor HrcA of Rhizobium johnstonii (strain DSM 114642 / LMG 32736 / 3841) (Rhizobium leguminosarum bv. viciae).